The chain runs to 696 residues: Polyribonucleotide nucleotidyltransferase (696 aa).

Residues Asp486 and Asp492 each coordinate Mg(2+). The KH domain occupies 553–612 (PRIIVRNIPKDRIGELIGPGGKNVRGISELTGAELYIEDDGRVTISGSNQESAEKAAKMV). The S1 motif domain occupies 622 to 690 (GKIYEGKVKR…KTGKIDLSRK (69 aa)).

This sequence belongs to the polyribonucleotide nucleotidyltransferase family. The cofactor is Mg(2+).

It localises to the cytoplasm. The enzyme catalyses RNA(n+1) + phosphate = RNA(n) + a ribonucleoside 5'-diphosphate. Involved in mRNA degradation. Catalyzes the phosphorolysis of single-stranded polyribonucleotides processively in the 3'- to 5'-direction. This Leptospira borgpetersenii serovar Hardjo-bovis (strain JB197) protein is Polyribonucleotide nucleotidyltransferase.